The following is a 628-amino-acid chain: Glutamyl-tRNA(Gln) amidotransferase subunit E (628 aa).

This sequence belongs to the GatB/GatE family. GatE subfamily. Heterodimer of GatD and GatE.

It carries out the reaction L-glutamyl-tRNA(Gln) + L-glutamine + ATP + H2O = L-glutaminyl-tRNA(Gln) + L-glutamate + ADP + phosphate + H(+). Allows the formation of correctly charged Gln-tRNA(Gln) through the transamidation of misacylated Glu-tRNA(Gln) in organisms which lack glutaminyl-tRNA synthetase. The reaction takes place in the presence of glutamine and ATP through an activated gamma-phospho-Glu-tRNA(Gln). The GatDE system is specific for glutamate and does not act on aspartate. This Sulfurisphaera tokodaii (strain DSM 16993 / JCM 10545 / NBRC 100140 / 7) (Sulfolobus tokodaii) protein is Glutamyl-tRNA(Gln) amidotransferase subunit E.